Reading from the N-terminus, the 338-residue chain is Ketol-acid reductoisomerase (NADP(+)) (338 aa).

The region spanning 1–181 (MKIYYDKDCN…GGGRAGIIET (181 aa)) is the KARI N-terminal Rossmann domain. NADP(+) contacts are provided by residues 24–27 (YGSQ), Arg-47, Ser-50, Ser-52, and 82–85 (DETQ). Residue His-107 is part of the active site. Gly-133 contacts NADP(+). The region spanning 182 to 327 (SFKEETETDL…ARLRSMMSWI (146 aa)) is the KARI C-terminal knotted domain. Mg(2+)-binding residues include Asp-190, Glu-194, Glu-226, and Glu-230. Ser-251 contributes to the substrate binding site.

Belongs to the ketol-acid reductoisomerase family. Mg(2+) is required as a cofactor.

The catalysed reaction is (2R)-2,3-dihydroxy-3-methylbutanoate + NADP(+) = (2S)-2-acetolactate + NADPH + H(+). It catalyses the reaction (2R,3R)-2,3-dihydroxy-3-methylpentanoate + NADP(+) = (S)-2-ethyl-2-hydroxy-3-oxobutanoate + NADPH + H(+). It functions in the pathway amino-acid biosynthesis; L-isoleucine biosynthesis; L-isoleucine from 2-oxobutanoate: step 2/4. It participates in amino-acid biosynthesis; L-valine biosynthesis; L-valine from pyruvate: step 2/4. Functionally, involved in the biosynthesis of branched-chain amino acids (BCAA). Catalyzes an alkyl-migration followed by a ketol-acid reduction of (S)-2-acetolactate (S2AL) to yield (R)-2,3-dihydroxy-isovalerate. In the isomerase reaction, S2AL is rearranged via a Mg-dependent methyl migration to produce 3-hydroxy-3-methyl-2-ketobutyrate (HMKB). In the reductase reaction, this 2-ketoacid undergoes a metal-dependent reduction by NADPH to yield (R)-2,3-dihydroxy-isovalerate. The chain is Ketol-acid reductoisomerase (NADP(+)) from Geobacter metallireducens (strain ATCC 53774 / DSM 7210 / GS-15).